We begin with the raw amino-acid sequence, 648 residues long: Rho GTPase-activating protein 25 (648 aa).

One can recognise a PH domain in the interval 46–151; it reads RPIKVGWLKK…WVKFLRRVAG (106 aa). Residues 160-354 enclose the Rho-GAP domain; sequence QRLDETVAYE…MMIRDHEVLF (195 aa). Residues 356 to 559 form a disordered region; the sequence is KSKDAPISPP…DLDSLQRTVQ (204 aa). 3 positions are modified to phosphoserine: Ser-363, Ser-396, and Ser-403. A compositionally biased stretch (polar residues) spans 393–410; the sequence is RTDSFSNTASSPDATSPT. Thr-407 bears the Phosphothreonine mark. Residues 417-431 are compositionally biased toward basic and acidic residues; that stretch reads QHQEDSGKAPRENPG. 2 stretches are compositionally biased toward polar residues: residues 453–462 and 497–515; these read SAFQGTTSSK and DQRT…SQGN. A Phosphoserine modification is found at Ser-537. Residues 540-641 are a coiled coil; the sequence is EAGSKNSGED…VKEFVKSMEK (102 aa).

In terms of biological role, GTPase activator for the Rho-type GTPases by converting them to an inactive GDP-bound state. In Mus musculus (Mouse), this protein is Rho GTPase-activating protein 25 (Arhgap25).